A 479-amino-acid chain; its full sequence is Cardiolipin synthase A (479 aa).

2 consecutive transmembrane segments (helical) span residues 8 to 28 and 38 to 58; these read FFGY…LHAL and IAWA…YLIF. PLD phosphodiesterase domains lie at 218 to 245 and 392 to 419; these read VNFR…GDEY and QPGF…DNRS. Residues H223, K225, D230, H397, K399, and D404 contribute to the active site.

Belongs to the phospholipase D family. Cardiolipin synthase subfamily. ClsA sub-subfamily.

It localises to the cell inner membrane. The enzyme catalyses 2 a 1,2-diacyl-sn-glycero-3-phospho-(1'-sn-glycerol) = a cardiolipin + glycerol. Its function is as follows. Catalyzes the reversible phosphatidyl group transfer from one phosphatidylglycerol molecule to another to form cardiolipin (CL) (diphosphatidylglycerol) and glycerol. The chain is Cardiolipin synthase A from Pseudomonas putida (strain ATCC 700007 / DSM 6899 / JCM 31910 / BCRC 17059 / LMG 24140 / F1).